Reading from the N-terminus, the 351-residue chain is Phenylacetaldoxime dehydratase (351 aa).

It belongs to the heme-containing dehydratase family. Monomer. The cofactor is heme b.

It carries out the reaction (Z)-phenylacetaldehyde oxime = phenylacetonitrile + H2O. Catalyzes the stoichiometric dehydration of Z-phenylacetaldoxime to phenylacetonitrile. Prefers the Z-form of phenylacetaldoxime over its E-isomer. The polypeptide is Phenylacetaldoxime dehydratase (Bacillus sp. (strain OxB-1)).